A 600-amino-acid polypeptide reads, in one-letter code: Chaperone protein DnaK (600 aa).

Threonine 175 carries the phosphothreonine; by autocatalysis modification. The span at 569–578 (SFAQATAQQA) shows a compositional bias: low complexity. Residues 569–600 (SFAQATAQQANTSESDPKADDSNTIDAEIKQD) are disordered. Over residues 583-600 (SDPKADDSNTIDAEIKQD) the composition is skewed to basic and acidic residues.

This sequence belongs to the heat shock protein 70 family.

In terms of biological role, acts as a chaperone. This is Chaperone protein DnaK from Mesomycoplasma hyopneumoniae (strain 7448) (Mycoplasma hyopneumoniae).